The primary structure comprises 382 residues: PPE family protein PPE44 (382 aa).

Belongs to the mycobacterial PPE family.

The protein resides in the secreted. Its subcellular location is the cell wall. It is found in the cell surface. Its function is as follows. Virulence factor that modulates host innate immune response. The polypeptide is PPE family protein PPE44 (Mycobacterium tuberculosis (strain CDC 1551 / Oshkosh)).